Consider the following 85-residue polypeptide: Large ribosomal subunit protein bL27 (85 aa).

The tract at residues 1–21 (MAHKKAGGSTRNGRDSESKRL) is disordered.

The protein belongs to the bacterial ribosomal protein bL27 family.

The polypeptide is Large ribosomal subunit protein bL27 (Pseudomonas putida (strain W619)).